The following is a 368-amino-acid chain: Germination protease (368 aa).

Positions 1–16 (MKNNELDVNQFLIRTD) are excised as a propeptide.

It belongs to the peptidase A25 family. Homotetramer. Post-translationally, autoproteolytically processed. The inactive tetrameric zymogen termed p46 autoprocesses to a smaller form termed p41, which is active only during spore germination.

The enzyme catalyses Endopeptidase action with P4 Glu or Asp, P1 preferably Glu &gt; Asp, P1' hydrophobic and P2' Ala.. In terms of biological role, initiates the rapid degradation of small, acid-soluble proteins during spore germination. This Bacillus velezensis (strain DSM 23117 / BGSC 10A6 / LMG 26770 / FZB42) (Bacillus amyloliquefaciens subsp. plantarum) protein is Germination protease.